The chain runs to 209 residues: Response regulator protein VraR (209 aa).

Residues 4-120 (KVLFVDDHEM…DIADAVRKTS (117 aa)) enclose the Response regulatory domain. A 4-aspartylphosphate modification is found at D55. Residues 141-206 (RAELYEMLTE…QAVIYAFQHN (66 aa)) form the HTH luxR-type domain. Positions 165-184 (NQEIASASHITIKTVKTHVS) form a DNA-binding region, H-T-H motif.

Homodimer. Post-translationally, phosphorylated by VraS. Phosphorylation state of VraR controls dimerization of the protein.

The protein resides in the cytoplasm. Member of the two-component regulatory system VraS/VraR involved in the control of the cell wall peptidoglycan biosynthesis. Upon cellular stress, the histidine kinase VraS transfers the phosphoryl group onto VraR. Upon phosphorylation, VraR dimerizes at the N-terminal domain. In turn, phosphorylation-induced dimerization expands and enhances the VraR binding to its own promoter leading to increased expression and subsequent modulation of as many as 40 genes, which ultimately constitute the S.aureus response to cell wall damage. In addition, inhibits the host autophagic flux and delays the early stage of autophagosome formation, thereby promoting bacterial survival. Facilitates the ability of S.aureus to resist host polymorphonuclear leukocytes-mediated phagocytosis and killing thus contributing to immune evasion. The protein is Response regulator protein VraR (vraR) of Staphylococcus aureus (strain Mu3 / ATCC 700698).